We begin with the raw amino-acid sequence, 799 residues long: Rho GTPase-activating protein gacI (799 aa).

Residues Ile226 to Phe451 enclose the Rho-GAP domain. The segment covering Arg472–Asp520 has biased composition (polar residues). Disordered regions lie at residues Arg472–Asn572 and Glu741–Gln799. Positions Asp525–Ala549 are enriched in low complexity. Pro residues predominate over residues Thr550 to Thr568. Low complexity-rich tracts occupy residues Gln743–Asn752 and Ile759–Ser791.

Its subcellular location is the cytoplasm. Functionally, rho GTPase-activating protein involved in the signal transduction pathway. The sequence is that of Rho GTPase-activating protein gacI (gacI) from Dictyostelium discoideum (Social amoeba).